The primary structure comprises 1072 residues: DNA-directed RNA polymerase subunit beta (1072 aa).

This sequence belongs to the RNA polymerase beta chain family. In plastids the minimal PEP RNA polymerase catalytic core is composed of four subunits: alpha, beta, beta', and beta''. When a (nuclear-encoded) sigma factor is associated with the core the holoenzyme is formed, which can initiate transcription.

Its subcellular location is the plastid. It localises to the chloroplast. It carries out the reaction RNA(n) + a ribonucleoside 5'-triphosphate = RNA(n+1) + diphosphate. Functionally, DNA-dependent RNA polymerase catalyzes the transcription of DNA into RNA using the four ribonucleoside triphosphates as substrates. In Amborella trichopoda, this protein is DNA-directed RNA polymerase subunit beta.